A 199-amino-acid chain; its full sequence is Ribosome maturation factor RimM (199 aa).

In terms of domain architecture, PRC barrel spans 95–168; that stretch reads EDEFYHADLV…FVRVDPVAAG (74 aa). A disordered region spans residues 167-199; the sequence is AGLVEDEDGDAPREEDFDPKGRPRGPRDAGGNR. Residues 176 to 193 are compositionally biased toward basic and acidic residues; that stretch reads DAPREEDFDPKGRPRGPR.

It belongs to the RimM family. As to quaternary structure, binds ribosomal protein uS19.

It localises to the cytoplasm. In terms of biological role, an accessory protein needed during the final step in the assembly of 30S ribosomal subunit, possibly for assembly of the head region. Essential for efficient processing of 16S rRNA. May be needed both before and after RbfA during the maturation of 16S rRNA. It has affinity for free ribosomal 30S subunits but not for 70S ribosomes. The chain is Ribosome maturation factor RimM from Mesorhizobium japonicum (strain LMG 29417 / CECT 9101 / MAFF 303099) (Mesorhizobium loti (strain MAFF 303099)).